Reading from the N-terminus, the 312-residue chain is Zinc transporter ZitB (312 aa).

6 helical membrane-spanning segments follow: residues 16–36, 40–60, 81–101, 117–137, 153–173, and 177–197; these read LLIA…GGWL, LALL…FIAL, LTTL…ILIV, TPML…FWIL, LHVL…IVIL, and WTPI…RSAW.

It belongs to the cation diffusion facilitator (CDF) transporter (TC 2.A.4) family. SLC30A subfamily.

Its subcellular location is the cell inner membrane. Functionally, involved in zinc efflux across the cytoplasmic membrane, thus reducing zinc accumulation in the cytoplasm and rendering bacteria more resistant to zinc. It may contribute to zinc homeostasis at low concentrations of zinc. The polypeptide is Zinc transporter ZitB (Yersinia pestis).